We begin with the raw amino-acid sequence, 204 residues long: Thiamine-phosphate synthase (204 aa).

4-amino-2-methyl-5-(diphosphooxymethyl)pyrimidine is bound by residues 37 to 41 and Asn69; that span reads QVREK. Positions 70 and 89 each coordinate Mg(2+). Residue Ser108 coordinates 4-amino-2-methyl-5-(diphosphooxymethyl)pyrimidine. 134-136 contributes to the 2-[(2R,5Z)-2-carboxy-4-methylthiazol-5(2H)-ylidene]ethyl phosphate binding site; it reads TGT. Residue Lys137 coordinates 4-amino-2-methyl-5-(diphosphooxymethyl)pyrimidine. 2-[(2R,5Z)-2-carboxy-4-methylthiazol-5(2H)-ylidene]ethyl phosphate-binding positions include Gly165 and 185-186; that span reads IS.

The protein belongs to the thiamine-phosphate synthase family. Mg(2+) serves as cofactor.

The catalysed reaction is 2-[(2R,5Z)-2-carboxy-4-methylthiazol-5(2H)-ylidene]ethyl phosphate + 4-amino-2-methyl-5-(diphosphooxymethyl)pyrimidine + 2 H(+) = thiamine phosphate + CO2 + diphosphate. It carries out the reaction 2-(2-carboxy-4-methylthiazol-5-yl)ethyl phosphate + 4-amino-2-methyl-5-(diphosphooxymethyl)pyrimidine + 2 H(+) = thiamine phosphate + CO2 + diphosphate. The enzyme catalyses 4-methyl-5-(2-phosphooxyethyl)-thiazole + 4-amino-2-methyl-5-(diphosphooxymethyl)pyrimidine + H(+) = thiamine phosphate + diphosphate. The protein operates within cofactor biosynthesis; thiamine diphosphate biosynthesis; thiamine phosphate from 4-amino-2-methyl-5-diphosphomethylpyrimidine and 4-methyl-5-(2-phosphoethyl)-thiazole: step 1/1. Functionally, condenses 4-methyl-5-(beta-hydroxyethyl)thiazole monophosphate (THZ-P) and 2-methyl-4-amino-5-hydroxymethyl pyrimidine pyrophosphate (HMP-PP) to form thiamine monophosphate (TMP). The polypeptide is Thiamine-phosphate synthase (Clostridium novyi (strain NT)).